A 279-amino-acid chain; its full sequence is Movement protein (279 aa).

This sequence belongs to the cucumovirus movement protein family.

The protein resides in the host cell junction. Its subcellular location is the host plasmodesma. Its function is as follows. Transports viral genome to neighboring plant cells directly through plasmosdesmata, without any budding. The movement protein allows efficient cell to cell propagation, by bypassing the host cell wall barrier. Acts by forming a tubular structure at the host plasmodesmata, enlarging it enough to allow free passage of virion capsids. This Cucumber mosaic virus (strain M) (CMV) protein is Movement protein.